The primary structure comprises 199 residues: Putative rhomboid protease YdcA (199 aa).

6 consecutive transmembrane segments (helical) span residues 14 to 34 (LYPV…FFSL), 65 to 85 (ILLH…FLFA), 97 to 117 (FLLV…VTEP), 122 to 142 (HVGA…MVLF), 147 to 167 (IGQE…LMSF), and 172 to 192 (INMM…FLCV). Ser126 functions as the Nucleophile in the catalytic mechanism. His177 (charge relay system) is an active-site residue.

This sequence belongs to the peptidase S54 family.

Its subcellular location is the cell membrane. The sequence is that of Putative rhomboid protease YdcA (ydcA) from Bacillus subtilis (strain 168).